The chain runs to 223 residues: Imidazoleglycerol-phosphate dehydratase (223 aa).

Belongs to the imidazoleglycerol-phosphate dehydratase family.

It catalyses the reaction D-erythro-1-(imidazol-4-yl)glycerol 3-phosphate = 3-(imidazol-4-yl)-2-oxopropyl phosphate + H2O. It participates in amino-acid biosynthesis; L-histidine biosynthesis; L-histidine from 5-phospho-alpha-D-ribose 1-diphosphate: step 6/9. In Torulaspora delbrueckii (Yeast), this protein is Imidazoleglycerol-phosphate dehydratase (HIS3).